The primary structure comprises 158 residues: uncharacterized protein (158 aa).

This is an uncharacterized protein from Caenorhabditis elegans.